Here is a 575-residue protein sequence, read N- to C-terminus: Probable methionine--tRNA ligase, mitochondrial (575 aa).

The short motif at 52 to 62 is the 'HIGH' region element; it reads FYVNGPPHIGH. Positions 352–356 match the 'KMSKS' region motif; the sequence is KMSKS. Lys-355 is an ATP binding site.

The protein belongs to the class-I aminoacyl-tRNA synthetase family.

It is found in the mitochondrion matrix. It carries out the reaction tRNA(Met) + L-methionine + ATP = L-methionyl-tRNA(Met) + AMP + diphosphate. In Dictyostelium discoideum (Social amoeba), this protein is Probable methionine--tRNA ligase, mitochondrial (mmetS).